A 130-amino-acid chain; its full sequence is Probable 4-amino-4-deoxy-L-arabinose-phosphoundecaprenol flippase subunit ArnF (130 aa).

The Cytoplasmic segment spans residues 1-4; that stretch reads MGYG. Residues 5 to 25 traverse the membrane as a helical segment; that stretch reads WALFSVALVSAAQLLLKWVMM. Residues 26–44 are Periplasmic-facing; the sequence is HLPPLGALRLWLDPAYAEP. A helical transmembrane segment spans residues 45-65; that stretch reads LALLMGGLLAYVCSMGCWFMA. Topologically, residues 66-74 are cytoplasmic; it reads LRRLPLNKA. Residues 75-95 traverse the membrane as a helical segment; that stretch reads YPLLSLSYVLVAACALMIPEF. Residues 96 to 103 lie on the Periplasmic side of the membrane; the sequence is NERFTFSR. Residues 104 to 124 traverse the membrane as a helical segment; it reads LMGVALICGGLLLICLPAGGK. At 125 to 130 the chain is on the cytoplasmic side; it reads GDTPRR.

This sequence belongs to the ArnF family. In terms of assembly, heterodimer of ArnE and ArnF.

It localises to the cell inner membrane. It participates in bacterial outer membrane biogenesis; lipopolysaccharide biosynthesis. In terms of biological role, translocates 4-amino-4-deoxy-L-arabinose-phosphoundecaprenol (alpha-L-Ara4N-phosphoundecaprenol) from the cytoplasmic to the periplasmic side of the inner membrane. The polypeptide is Probable 4-amino-4-deoxy-L-arabinose-phosphoundecaprenol flippase subunit ArnF (Sodalis glossinidius (strain morsitans)).